The following is a 107-amino-acid chain: Large ribosomal subunit protein uL24 (107 aa).

The protein belongs to the universal ribosomal protein uL24 family. In terms of assembly, part of the 50S ribosomal subunit.

One of two assembly initiator proteins, it binds directly to the 5'-end of the 23S rRNA, where it nucleates assembly of the 50S subunit. In terms of biological role, one of the proteins that surrounds the polypeptide exit tunnel on the outside of the subunit. This Neisseria gonorrhoeae (strain ATCC 700825 / FA 1090) protein is Large ribosomal subunit protein uL24.